Here is a 470-residue protein sequence, read N- to C-terminus: Aromatic amino acid aminotransferase C569.07 (470 aa).

It belongs to the class-I pyridoxal-phosphate-dependent aminotransferase family. The cofactor is pyridoxal 5'-phosphate.

Its subcellular location is the cytoplasm. It catalyses the reaction an aromatic L-alpha-amino acid + 2-oxoglutarate = an aromatic oxo-acid + L-glutamate. Its function is as follows. Has aromatic amino acid transaminase activity. In Schizosaccharomyces pombe (strain 972 / ATCC 24843) (Fission yeast), this protein is Aromatic amino acid aminotransferase C569.07.